A 506-amino-acid polypeptide reads, in one-letter code: Tyrosine-protein phosphatase non-receptor type substrate 1 (506 aa).

Positions 1-29 (MEPARPAPGRLRPLLCLLLAASNAWTGTA) are cleaved as a signal peptide. In terms of domain architecture, Ig-like V-type spans 30–145 (GDGELQVIQP…SGPGTHLTVS (116 aa)). Residues 30–371 (GDGELQVIQP…PGPNDSNWTS (342 aa)) lie on the Extracellular side of the membrane. A disulfide bridge links cysteine 55 with cysteine 121. Asparagine 92 is a glycosylation site (N-linked (GlcNAc...) asparagine). The tract at residues 136–159 (SGPGTHLTVSAKPSPPVLSGPTVR) is disordered. 2 Ig-like C1-type domains span residues 148–248 (PSPP…ANLS) and 255–348 (PTLE…HTLE). 12 N-linked (GlcNAc...) asparagine glycosylation sites follow: asparagine 167, asparagine 179, asparagine 204, asparagine 210, asparagine 246, asparagine 270, asparagine 292, asparagine 311, asparagine 319, asparagine 344, asparagine 365, and asparagine 368. A disulfide bond links cysteine 170 and cysteine 228. Cysteine 273 and cysteine 331 are oxidised to a cystine. The interval 344–364 (NHTLEVSAPQKDQDTGQTPGP) is disordered. A helical transmembrane segment spans residues 372–392 (IFIVVGVVCALLVALLIAALY). Residues 393-506 (LLRIRQNKAK…EYASVQVQRK (114 aa)) are Cytoplasmic-facing. Positions 402–468 (KGSTSSTRLH…QARPPPVSED (67 aa)) are disordered. Residues 409 to 418 (RLHEPEKNTR) are compositionally biased toward basic and acidic residues. Over residues 419–429 (ETTQIQDNNDI) the composition is skewed to polar residues. Tyrosine 431 is subject to Phosphotyrosine; by Tyr-kinases. An SH2-binding motif is present at residues 432-435 (ADLN). An SH3-binding motif is present at residues 441-446 (KSTPKA). The segment covering 444–456 (PKANEPNNHTEYA) has biased composition (polar residues). A phosphotyrosine; by Tyr-kinases mark is found at tyrosine 455, tyrosine 472, and tyrosine 498. 3 consecutive short sequence motifs (SH2-binding) follow at residues 455–458 (YASI), 472–475 (YADL), and 498–501 (YASV). The tract at residues 480 to 506 (LNRTPKQPAPKPEPSYSEYASVQVQRK) is disordered. A compositionally biased stretch (polar residues) spans 497–506 (EYASVQVQRK).

As to quaternary structure, binds PTPN11 when tyrosine-phosphorylated, except in macrophages, where it primarily binds PTPN6. Binds GRB2 in vitro. Binds JAK2 irrespective of its phosphorylation status and forms a stable complex. Binds SCAP1 and/or SCAP2. The resulting complex recruits FYB1. Binds FGR and PTK2B. Interacts with TRIM2. Post-translationally, phosphorylated on tyrosine residues. In terms of tissue distribution, highly expressed in spleen macrophages. Detected in skin dendritic cells.

It localises to the membrane. Immunoglobulin-like cell surface receptor for CD47. Acts as docking protein and induces translocation of PTPN6, PTPN11 and other binding partners from the cytosol to the plasma membrane. Supports adhesion of cerebellar neurons, neurite outgrowth and glial cell attachment. May play a key role in intracellular signaling during synaptogenesis and in synaptic function. Involved in the negative regulation of receptor tyrosine kinase-coupled cellular responses induced by cell adhesion, growth factors or insulin. Mediates negative regulation of phagocytosis, mast cell activation and dendritic cell activation. CD47 binding prevents maturation of immature dendritic cells and inhibits cytokine production by mature dendritic cells. Plays a role in antiviral immunity and limits new world arenavirus infection by decreasing virus internalization. Receptor for THBS1. Interaction with THBS1 stimulates phosphorylation of SIRPA. In response to THBS1, involved in ROS signaling in non-phagocytic cells, stimulating NADPH oxidase-derived ROS production. This Bos taurus (Bovine) protein is Tyrosine-protein phosphatase non-receptor type substrate 1 (SIRPA).